A 542-amino-acid polypeptide reads, in one-letter code: 2,3-bisphosphoglycerate-independent phosphoglycerate mutase (542 aa).

Mn(2+) is bound by residues aspartate 24 and serine 74. Serine 74 acts as the Phosphoserine intermediate in catalysis. Substrate is bound by residues histidine 135, 165–166 (RD), arginine 197, arginine 203, 268–271 (RPDR), and lysine 341. 5 residues coordinate Mn(2+): aspartate 408, histidine 412, aspartate 449, histidine 450, and histidine 467.

It belongs to the BPG-independent phosphoglycerate mutase family. Monomer. Mn(2+) is required as a cofactor.

It carries out the reaction (2R)-2-phosphoglycerate = (2R)-3-phosphoglycerate. Its pathway is carbohydrate degradation; glycolysis; pyruvate from D-glyceraldehyde 3-phosphate: step 3/5. Catalyzes the interconversion of 2-phosphoglycerate and 3-phosphoglycerate. This chain is 2,3-bisphosphoglycerate-independent phosphoglycerate mutase, found in Prochlorococcus marinus (strain NATL1A).